Consider the following 148-residue polypeptide: Large ribosomal subunit protein uL13 (148 aa).

It belongs to the universal ribosomal protein uL13 family. In terms of assembly, part of the 50S ribosomal subunit.

Functionally, this protein is one of the early assembly proteins of the 50S ribosomal subunit, although it is not seen to bind rRNA by itself. It is important during the early stages of 50S assembly. This chain is Large ribosomal subunit protein uL13, found in Oenococcus oeni (strain ATCC BAA-331 / PSU-1).